Reading from the N-terminus, the 276-residue chain is Octanoyltransferase LipM (276 aa).

The region spanning 31-246 is the BPL/LPL catalytic domain; sequence GKVPPTVRFY…GFASGLEVEL (216 aa). Cys-148 functions as the Acyl-thioester intermediate in the catalytic mechanism.

This sequence belongs to the octanoyltransferase LipM family. As to quaternary structure, monomer.

It carries out the reaction octanoyl-[ACP] + L-lysyl-[protein] = N(6)-octanoyl-L-lysyl-[protein] + holo-[ACP] + H(+). The protein operates within protein modification; protein lipoylation via endogenous pathway; protein N(6)-(lipoyl)lysine from octanoyl-[acyl-carrier-protein]. Its function is as follows. Catalyzes the transfer of endogenously produced octanoic acid from octanoyl-acyl-carrier-protein onto the lipoyl domain of GcvH, an intermediate carrier during protein lipoylation. This is Octanoyltransferase LipM from Brevibacillus brevis (strain 47 / JCM 6285 / NBRC 100599).